Consider the following 362-residue polypeptide: Dihydroorotate dehydrogenase (quinone) (362 aa).

Residues 62–66 and threonine 86 contribute to the FMN site; that span reads AGYDK. Lysine 66 contacts substrate. A substrate-binding site is contributed by 111–115; that stretch reads NRLGF. Positions 139 and 170 each coordinate FMN. Residue asparagine 170 coordinates substrate. Catalysis depends on serine 173, which acts as the Nucleophile. Asparagine 175 lines the substrate pocket. Lysine 215 and serine 243 together coordinate FMN. Substrate is bound at residue 244–245; it reads NT. FMN contacts are provided by residues glycine 266, glycine 295, and 316 to 317; that span reads YS.

Belongs to the dihydroorotate dehydrogenase family. Type 2 subfamily. As to quaternary structure, monomer. FMN is required as a cofactor.

Its subcellular location is the cell membrane. The enzyme catalyses (S)-dihydroorotate + a quinone = orotate + a quinol. It functions in the pathway pyrimidine metabolism; UMP biosynthesis via de novo pathway; orotate from (S)-dihydroorotate (quinone route): step 1/1. Its function is as follows. Catalyzes the conversion of dihydroorotate to orotate with quinone as electron acceptor. In Rhizobium rhizogenes (strain K84 / ATCC BAA-868) (Agrobacterium radiobacter), this protein is Dihydroorotate dehydrogenase (quinone).